Reading from the N-terminus, the 596-residue chain is Fructan 1-exohydrolase w3 (596 aa).

A signal peptide spans 1–20 (MAQAWAFLLPVLVLGSYVTS). Residue aspartate 75 is part of the active site. 3 N-linked (GlcNAc...) asparagine glycosylation sites follow: asparagine 168, asparagine 236, and asparagine 248. Cysteine 446 and cysteine 492 form a disulfide bridge.

The protein belongs to the glycosyl hydrolase 32 family. Expressed in the stem, particularly the penultimate internode. Little expression is detected in roots and in the peduncle part of the stem.

The catalysed reaction is Hydrolysis of terminal, non-reducing (2-&gt;1)-linked beta-D-fructofuranose residues in fructans.. Inhibited by sucrose. Hydrolyzes inulin-type beta-(2,1)-fructans and beta-(2,1)-linkages in branched fructans. Has low activity against beta-(2,6)-linked fructans. May play a role as a beta-(2,1)-trimmer during graminan biosynthesis. This Triticum aestivum (Wheat) protein is Fructan 1-exohydrolase w3.